The primary structure comprises 1064 residues: Serine protease inhibitor Kazal-type 5 (1064 aa).

The signal sequence occupies residues 1 to 22; the sequence is MKIATVSVLLPLALCLIQDAAS. A Kazal-like 1; atypical domain is found at 28–66; that stretch reads EMCHEFQAFMKNGKLFCPQDKKFFQSLDGIMFINKCATC. 21 disulfides stabilise this stretch: Cys-30–Cys-66, Cys-44–Cys-63, Cys-97–Cys-133, Cys-111–Cys-130, Cys-119–Cys-151, Cys-161–Cys-197, Cys-175–Cys-194, Cys-225–Cys-261, Cys-239–Cys-258, Cys-297–Cys-333, Cys-311–Cys-330, Cys-367–Cys-403, Cys-381–Cys-400, Cys-437–Cys-473, Cys-451–Cys-470, Cys-496–Cys-532, Cys-510–Cys-529, Cys-567–Cys-603, Cys-581–Cys-600, Cys-632–Cys-668, and Cys-646–Cys-665. Kazal-like domains follow at residues 91 to 153, 155 to 216, 219 to 285, 291 to 352, 361 to 423, 431 to 489, 490 to 551, 561 to 622, 626 to 688, 701 to 757, 768 to 830, 843 to 905, 910 to 971, and 987 to 1048; these read APTE…ECKS, NPEQ…ETRI, NAEK…KAEE, REIV…ARAR, TSYA…KSRN, ASFE…KAKR, EAAK…EEKG, EAVQ…PRAK, EAEK…EDQR, GNTQ…KNEY, ESGK…EDRS, NDKE…EKSS, NNAK…EKPS, and SLDS…KCEE. Residues 676–688 are compositionally biased toward basic and acidic residues; sequence NEERKRKEEEDQR. Positions 676-705 are disordered; that stretch reads NEERKRKEEEDQRNAAGHGSSGGGGGNTQD. Disulfide bonds link Cys-707-Cys-743, Cys-721-Cys-740, Cys-774-Cys-810, Cys-788-Cys-807, Cys-849-Cys-885, and Cys-863-Cys-882. The tract at residues 751 to 775 is disordered; the sequence is AERKNEYSRSRSNGTGSESGKDTCD. The interval 818–849 is disordered; sequence AAEKKKKEDEDRSNTGERSNTGERSNDKEDLC. Positions 895–905 are enriched in basic and acidic residues; the sequence is ERKKKDEEKSS. Positions 895–915 are disordered; that stretch reads ERKKKDEEKSSSKPSNNAKDE. Intrachain disulfides connect Cys-916–Cys-952 and Cys-930–Cys-949. Over residues 967–977 the composition is skewed to basic and acidic residues; the sequence is QEKPSHVRASQ. The disordered stretch occupies residues 967-987; that stretch reads QEKPSHVRASQEEDSPDSFSS. Disulfide bonds link Cys-993/Cys-1028, Cys-1006/Cys-1025, and Cys-1014/Cys-1046. Residues 1041–1064 form a disordered region; that stretch reads RSTGKCEESSTPGTTAASMPPSDE.

Proteolytically processed by furin in individual domains (D1, D5, D6, D8 through D11, and D9 through D15) exhibiting various inhibitory potentials for multiple proteases. In terms of tissue distribution, highly expressed in the thymus and stratum corneum. Also found in the oral mucosa, parathyroid gland, Bartholin's glands, tonsils, and vaginal epithelium. Very low levels are detected in lung, kidney, and prostate.

It localises to the secreted. In terms of biological role, serine protease inhibitor, probably important for the anti-inflammatory and/or antimicrobial protection of mucous epithelia. Contribute to the integrity and protective barrier function of the skin by regulating the activity of defense-activating and desquamation-involved proteases. Inhibits KLK5, it's major target, in a pH-dependent manner. Inhibits KLK7, KLK14 CASP14, and trypsin. The chain is Serine protease inhibitor Kazal-type 5 (SPINK5) from Homo sapiens (Human).